The chain runs to 227 residues: MESFEELEKLLDYSFKNKALLTEALSHPSLRQHHEYKANKDYERLEFLGDAVLNLIITEILFNNFKEYNEGNLAKIRSYLVCKETICVVGAKLGLKNYIIMTHGEEIAGGRDNPNNIENVTEALIAAIYLDSDITTIHNIIGKLWAEFIKVKDLTDYDPKTALQEWAQSKDHHIPIYRLIKREGVAHLSTFTVSVKINGYEQTGKGHSIKEAEKNAARELLHKLKLL.

In terms of domain architecture, RNase III spans 4–133; sequence FEELEKLLDY…LIAAIYLDSD (130 aa). Glu-46 is a Mg(2+) binding site. Asp-50 is an active-site residue. Positions 119 and 122 each coordinate Mg(2+). Residue Glu-122 is part of the active site. Residues 158-226 enclose the DRBM domain; it reads DPKTALQEWA…ARELLHKLKL (69 aa).

This sequence belongs to the ribonuclease III family. Homodimer. Requires Mg(2+) as cofactor.

The protein resides in the cytoplasm. The catalysed reaction is Endonucleolytic cleavage to 5'-phosphomonoester.. Functionally, digests double-stranded RNA. Involved in the processing of primary rRNA transcript to yield the immediate precursors to the large and small rRNAs (23S and 16S). Processes some mRNAs, and tRNAs when they are encoded in the rRNA operon. Processes pre-crRNA and tracrRNA of type II CRISPR loci if present in the organism. The chain is Ribonuclease 3 from Rickettsia bellii (strain OSU 85-389).